A 428-amino-acid polypeptide reads, in one-letter code: D-serine dehydratase (428 aa).

Lys57 is subject to N6-(pyridoxal phosphate)lysine. Pyridoxal 5'-phosphate contacts are provided by Tyr203, Tyr210, Thr255, Gly286, and Asn287. Zn(2+) contacts are provided by His398 and Cys400.

It belongs to the DSD1 family. In terms of assembly, homodimer. It depends on pyridoxal 5'-phosphate as a cofactor. Requires Zn(2+) as cofactor.

It catalyses the reaction D-serine = pyruvate + NH4(+). With respect to regulation, sodium cyanoborohydride, N-ethylmaleimide, hydroxylamine, phenyhydrazin and EDTA are inhibitors of the catalytic activity. In terms of biological role, catalyzes the conversion of D-serine to pyruvate and ammonia. May play a role in D-serine detoxification. This chain is D-serine dehydratase, found in Saccharomyces cerevisiae (strain ATCC 204508 / S288c) (Baker's yeast).